Reading from the N-terminus, the 200-residue chain is Polyadenylate-binding protein 1-like 2 (200 aa).

RRM domains follow at residues 2 to 80 and 90 to 166; these read ASLY…WSQR and GNVF…RFKS. The tract at residues 170-200 is disordered; the sequence is REAERGAWARQSTSADVKDFEEDTDEEATLR. Acidic residues predominate over residues 188-200; sequence DFEEDTDEEATLR.

In Homo sapiens (Human), this protein is Polyadenylate-binding protein 1-like 2 (PABPC1L2A).